A 275-amino-acid chain; its full sequence is Lectin 8 (275 aa).

Residues methionine 1 to serine 31 form the signal peptide. 2 N-linked (GlcNAc...) asparagine glycosylation sites follow: asparagine 55 and asparagine 150.

The protein belongs to the leguminous lectin family.

In terms of biological role, may be involved in arbuscular mycorrhizal (AM) symbiosis with AM fungi. The chain is Lectin 8 from Medicago truncatula (Barrel medic).